Consider the following 2304-residue polypeptide: Protein Ycf2 (2304 aa).

An ATP-binding site is contributed by Gly-1637 to Ser-1644.

Belongs to the Ycf2 family.

The protein resides in the plastid. It localises to the chloroplast stroma. Probable ATPase of unknown function. Its presence in a non-photosynthetic plant (Epifagus virginiana) and experiments in tobacco indicate that it has an essential function which is probably not related to photosynthesis. The protein is Protein Ycf2 of Amborella trichopoda.